We begin with the raw amino-acid sequence, 77 residues long: Large ribosomal subunit protein bL28 (77 aa).

It belongs to the bacterial ribosomal protein bL28 family.

This Verminephrobacter eiseniae (strain EF01-2) protein is Large ribosomal subunit protein bL28.